A 461-amino-acid polypeptide reads, in one-letter code: MSTICAISTAPGVGGIAVIRVSGPDTFKICDRIFRPKKAGKSLSTQKAYTLTYGSIVGNNDETIDEVIAAVFRAPHSFTGEDTVEITCHGSTYIQQQILQSLISSGCRIAQPGEYTQRAFMNGKMDLSQAEAVADLIASTSAGQHRLALSQMRGGFSRELAELRNQLLHFTSLMELELDFSDHEELEFADRSELRTLADHIEQVISKLAQSFSVGNAIKNGIPVAIIGETNAGKSTLLNALLNEDKAIVSDIHGTTRDVIEDTININGQLFRFIDTAGIRETSDAIEALGIERSFKALDQAQIVILMYDLTRDLKDFEAFYQEIAPRLTNKSVILAMNKCDVLPTSSLPTFSFPTEGWHQIAISAKSKLHIAELQQLLTEVSSIPTLHQSDIIVTNVRHFEALTHALEAIHRVQEGLNSSLSGDFISQDLRECIFHLSDIVGEVTTDQVLGNIFRHFCIGK.

3 residues coordinate (6S)-5-formyl-5,6,7,8-tetrahydrofolate: Arg-20, Glu-85, and Lys-124. The TrmE-type G domain maps to 221-383 (GIPVAIIGET…LQQLLTEVSS (163 aa)). Asn-231 lines the K(+) pocket. GTP contacts are provided by residues 231 to 236 (NAGKST), 250 to 256 (SDIHGTT), and 275 to 278 (DTAG). Ser-235 contacts Mg(2+). The K(+) site is built by Ser-250, Ile-252, and Thr-255. Thr-256 contributes to the Mg(2+) binding site. Lys-461 is a binding site for (6S)-5-formyl-5,6,7,8-tetrahydrofolate.

This sequence belongs to the TRAFAC class TrmE-Era-EngA-EngB-Septin-like GTPase superfamily. TrmE GTPase family. In terms of assembly, homodimer. Heterotetramer of two MnmE and two MnmG subunits. Requires K(+) as cofactor.

It localises to the cytoplasm. In terms of biological role, exhibits a very high intrinsic GTPase hydrolysis rate. Involved in the addition of a carboxymethylaminomethyl (cmnm) group at the wobble position (U34) of certain tRNAs, forming tRNA-cmnm(5)s(2)U34. In Parabacteroides distasonis (strain ATCC 8503 / DSM 20701 / CIP 104284 / JCM 5825 / NCTC 11152), this protein is tRNA modification GTPase MnmE.